Consider the following 284-residue polypeptide: Bifunctional protein FolD (284 aa).

NADP(+) is bound by residues 164–166 (GRG), threonine 189, and isoleucine 230.

The protein belongs to the tetrahydrofolate dehydrogenase/cyclohydrolase family. Homodimer.

It carries out the reaction (6R)-5,10-methylene-5,6,7,8-tetrahydrofolate + NADP(+) = (6R)-5,10-methenyltetrahydrofolate + NADPH. The enzyme catalyses (6R)-5,10-methenyltetrahydrofolate + H2O = (6R)-10-formyltetrahydrofolate + H(+). Its pathway is one-carbon metabolism; tetrahydrofolate interconversion. Its function is as follows. Catalyzes the oxidation of 5,10-methylenetetrahydrofolate to 5,10-methenyltetrahydrofolate and then the hydrolysis of 5,10-methenyltetrahydrofolate to 10-formyltetrahydrofolate. In Pelotomaculum thermopropionicum (strain DSM 13744 / JCM 10971 / SI), this protein is Bifunctional protein FolD.